We begin with the raw amino-acid sequence, 328 residues long: Probable D,D-dipeptide transport ATP-binding protein DdpD (328 aa).

The ABC transporter domain maps to 6–257 (LDIQQLHLSF…PRHPYTIGLL (252 aa)). 42-49 (GESGSGKS) contributes to the ATP binding site.

This sequence belongs to the ABC transporter superfamily. In terms of assembly, the complex is composed of two ATP-binding proteins (DdpD and DdpF), two transmembrane proteins (DdpB and DdpC) and a solute-binding protein (DdpA).

It localises to the cell inner membrane. Part of the ABC transporter complex DdpABCDF, which is probably involved in D,D-dipeptide transport. Probably responsible for energy coupling to the transport system. In Escherichia coli (strain K12), this protein is Probable D,D-dipeptide transport ATP-binding protein DdpD.